The chain runs to 281 residues: Dexamethasone-induced Ras-related protein 1 (281 aa).

An S-nitrosocysteine modification is found at Cys11. Gly31 to Thr38 is a GTP binding site. An Effector region motif is present at residues Tyr53 to His61. GTP contacts are provided by residues Asp78–Asn82 and Asn145–Asp148. A Cysteine methyl ester modification is found at Cys278. Cys278 is lipidated: S-farnesyl cysteine. A propeptide spans Val279 to Ser281 (removed in mature form).

Belongs to the small GTPase superfamily. RasD family. In terms of assembly, forms a ternary complex with CAPON and NOS1. Component of a complex, at least composed of APBB1, RASD1/DEXRAS1 and APP. Interacts with APBB1/FE65. Post-translationally, S-nitrosylation stimulates guanine-nucleotide exchange activity. Expressed in a variety of tissues including heart, cardiovascular tissues, brain, placenta, lung, liver, skeletal muscle, kidney, pancreas, gastrointestinal and reproductive tissues.

The protein resides in the cell membrane. The protein localises to the cytoplasm. It localises to the perinuclear region. Its subcellular location is the nucleus. Small GTPase. Negatively regulates the transcription regulation activity of the APBB1/FE65-APP complex via its interaction with APBB1/FE65. This Homo sapiens (Human) protein is Dexamethasone-induced Ras-related protein 1 (RASD1).